A 301-amino-acid polypeptide reads, in one-letter code: Probable alpha-L-glutamate ligase (301 aa).

In terms of domain architecture, ATP-grasp spans 104 to 287 (LQLLSRRGIG…VAGMIIEHLE (184 aa)). ATP contacts are provided by residues lysine 141, 178 to 179 (EY), aspartate 187, and 211 to 213 (RSN). Positions 248, 260, and 262 each coordinate Mg(2+). The Mn(2+) site is built by aspartate 248, glutamate 260, and asparagine 262.

It belongs to the RimK family. It depends on Mg(2+) as a cofactor. Mn(2+) serves as cofactor.

This Pseudomonas putida (strain ATCC 700007 / DSM 6899 / JCM 31910 / BCRC 17059 / LMG 24140 / F1) protein is Probable alpha-L-glutamate ligase.